Reading from the N-terminus, the 327-residue chain is Phenylalanine--tRNA ligase alpha subunit (327 aa).

Mg(2+) is bound at residue glutamate 252.

It belongs to the class-II aminoacyl-tRNA synthetase family. Phe-tRNA synthetase alpha subunit type 1 subfamily. As to quaternary structure, tetramer of two alpha and two beta subunits. The cofactor is Mg(2+).

It localises to the cytoplasm. The enzyme catalyses tRNA(Phe) + L-phenylalanine + ATP = L-phenylalanyl-tRNA(Phe) + AMP + diphosphate + H(+). This chain is Phenylalanine--tRNA ligase alpha subunit, found in Yersinia pestis bv. Antiqua (strain Angola).